Consider the following 396-residue polypeptide: Elongation factor Tu (396 aa).

A tr-type G domain is found at 10 to 205; that stretch reads KSHANIGTIG…AVDEYIPTPE (196 aa). Residues 19–26 form a G1 region; it reads GHVDHGKT. Residue 19–26 participates in GTP binding; it reads GHVDHGKT. Thr26 is a binding site for Mg(2+). Residues 61–65 are G2; sequence GITIS. Residues 82-85 form a G3 region; the sequence is DCPG. GTP is bound by residues 82–86 and 137–140; these read DCPGH and NKCD. The tract at residues 137 to 140 is G4; the sequence is NKCD. The interval 175-177 is G5; that stretch reads SAL.

It belongs to the TRAFAC class translation factor GTPase superfamily. Classic translation factor GTPase family. EF-Tu/EF-1A subfamily. In terms of assembly, monomer.

It localises to the cytoplasm. The catalysed reaction is GTP + H2O = GDP + phosphate + H(+). Its function is as follows. GTP hydrolase that promotes the GTP-dependent binding of aminoacyl-tRNA to the A-site of ribosomes during protein biosynthesis. This Bacillus pumilus (strain SAFR-032) protein is Elongation factor Tu.